The chain runs to 395 residues: Probable eukaryotic translation initiation factor 5 (395 aa).

Position 28 to 35 (28 to 35 (GKGNGIKT)) interacts with GTP. 2 disordered regions span residues 146–171 (PPAK…AEDE) and 374–395 (LAEA…DDDE). Residues 147 to 157 (PAKKKSHKHKR) show a composition bias toward basic residues. Composition is skewed to acidic residues over residues 161-170 (VAEEEDGAED) and 377-395 (ASDE…DDDE). The 157-residue stretch at 228–384 (EEAESSRYDQ…AEASDESESE (157 aa)) folds into the W2 domain.

It belongs to the eIF-2-beta/eIF-5 family. In terms of assembly, monomer.

In terms of biological role, catalyzes the hydrolysis of GTP bound to the 40S ribosomal initiation complex (40S.mRNA.Met-tRNA[F].eIF-2.GTP) with the subsequent joining of a 60S ribosomal subunit resulting in the release of eIF-2 and the guanine nucleotide. The subsequent joining of a 60S ribosomal subunit results in the formation of a functional 80S initiation complex (80S.mRNA.Met-tRNA[F]). This Schizosaccharomyces pombe (strain 972 / ATCC 24843) (Fission yeast) protein is Probable eukaryotic translation initiation factor 5 (tif5).